The sequence spans 401 residues: MGRATKVVLAYSGGVDTSVCIPYLKQEWGVEEVITFAADLGQGDELEPIRLKALEAGATQSLVGDLIKPFIEEFAFPAIRANALYEGRYPLSTALARPLIARRLVEVAREVGADAVAHGCTGKGNDQVRFDVAIASLAPDLKVLTPAREWGMSREETIAYGERFGMPSPVSKKSPYSIDLNLLGRSIEAGPLEDPMVAPPEEVFAMTRSVDQTPNDAEEIEIQFEGGNPVAINGKRLEPVSLIREANLLAGTHGIGRLDMIENRVVGIKSREIYETPGLLLLIQAHQELESLTLAADVLRTKRQLEMQWADLVYQGLWFGPLKEALDGFMDRTQIHVNGVVRLKLHKGNATVTGRASTDNSLYIPEMASYGSEDKFDHRAAEGFIYVWGLPTRLWAAKHRR.

ATP-binding positions include 10 to 18 and Ala38; that span reads AYSGGVDTS. Tyr89 is a binding site for L-citrulline. Gly119 serves as a coordination point for ATP. The L-aspartate site is built by Thr121, Asn125, and Asp126. Asn125 is a binding site for L-citrulline. L-citrulline is bound by residues Arg129, Ser177, Ser186, Glu262, and Tyr274.

Belongs to the argininosuccinate synthase family. Type 1 subfamily. Homotetramer.

It is found in the cytoplasm. The enzyme catalyses L-citrulline + L-aspartate + ATP = 2-(N(omega)-L-arginino)succinate + AMP + diphosphate + H(+). Its pathway is amino-acid biosynthesis; L-arginine biosynthesis; L-arginine from L-ornithine and carbamoyl phosphate: step 2/3. This chain is Argininosuccinate synthase, found in Synechococcus sp. (strain CC9311).